The sequence spans 221 residues: Urease accessory protein UreG (221 aa).

Position 19–26 (19–26 (GPVGSGKT)) interacts with GTP.

Belongs to the SIMIBI class G3E GTPase family. UreG subfamily. As to quaternary structure, homodimer. UreD, UreF and UreG form a complex that acts as a GTP-hydrolysis-dependent molecular chaperone, activating the urease apoprotein by helping to assemble the nickel containing metallocenter of UreC. The UreE protein probably delivers the nickel.

Its subcellular location is the cytoplasm. Its function is as follows. Facilitates the functional incorporation of the urease nickel metallocenter. This process requires GTP hydrolysis, probably effectuated by UreG. This chain is Urease accessory protein UreG, found in Yersinia enterocolitica serotype O:8 / biotype 1B (strain NCTC 13174 / 8081).